A 302-amino-acid chain; its full sequence is Protein FdhE homolog (302 aa).

Belongs to the FdhE family.

It localises to the cytoplasm. Its function is as follows. Necessary for formate dehydrogenase activity. In Haemophilus influenzae (strain PittGG), this protein is Protein FdhE homolog.